A 731-amino-acid chain; its full sequence is Auxin response factor 3 (731 aa).

Positions 1–22 are enriched in low complexity; that stretch reads MASSASSSSSPSSRPPLMALPS. Residues 1–41 form a disordered region; sequence MASSASSSSSPSSRPPLMALPSFYRPPWPSERGGEQRATDC. The TF-B3 DNA-binding region spans 191–293; that stretch reads FCKTLTASDT…ELRLGVRRAT (103 aa).

This sequence belongs to the ARF family. In terms of assembly, homo and heterodimers. Expressed in roots, culms, leaves and young panicles.

Its subcellular location is the nucleus. Functionally, auxin response factors (ARFs) are transcriptional factors that bind specifically to the DNA sequence 5'-TGTCTC-3' found in the auxin-responsive promoter elements (AuxREs). The protein is Auxin response factor 3 (ARF3) of Oryza sativa subsp. japonica (Rice).